Here is a 367-residue protein sequence, read N- to C-terminus: tRNA N6-adenosine threonylcarbamoyltransferase (367 aa).

Residues H123 and H127 each contribute to the Fe cation site. Substrate is bound by residues 145–149 (LVSGG), D178, G191, and N288. D316 is a binding site for Fe cation.

Belongs to the KAE1 / TsaD family. The cofactor is Fe(2+).

Its subcellular location is the cytoplasm. It catalyses the reaction L-threonylcarbamoyladenylate + adenosine(37) in tRNA = N(6)-L-threonylcarbamoyladenosine(37) in tRNA + AMP + H(+). Required for the formation of a threonylcarbamoyl group on adenosine at position 37 (t(6)A37) in tRNAs that read codons beginning with adenine. Is involved in the transfer of the threonylcarbamoyl moiety of threonylcarbamoyl-AMP (TC-AMP) to the N6 group of A37, together with TsaE and TsaB. TsaD likely plays a direct catalytic role in this reaction. The chain is tRNA N6-adenosine threonylcarbamoyltransferase from Caulobacter vibrioides (strain ATCC 19089 / CIP 103742 / CB 15) (Caulobacter crescentus).